Reading from the N-terminus, the 76-residue chain is Omega-conotoxin-like TxO1 (76 aa).

A signal peptide spans 1-22 (MKLTCVVIVAVLFLTVWTFATA). The propeptide occupies 23–50 (DDSGNGLEKLFSNAHHEMKNPEASKLNE). Intrachain disulfides connect Cys52–Cys67, Cys59–Cys70, and Cys66–Cys75.

The protein belongs to the conotoxin O1 superfamily. As to expression, expressed by the venom duct.

Its subcellular location is the secreted. Omega-conotoxins act at presynaptic membranes, they bind and block voltage-gated calcium channels (Cav). The chain is Omega-conotoxin-like TxO1 from Conus textile (Cloth-of-gold cone).